We begin with the raw amino-acid sequence, 769 residues long: Non-secreted LysM effector LysM17 (769 aa).

A helical transmembrane segment spans residues leucine 173–isoleucine 193. N-linked (GlcNAc...) asparagine glycosylation is found at asparagine 305, asparagine 368, asparagine 423, and asparagine 452. 2 LysM domains span residues arginine 498–cysteine 543 and tyrosine 562–leucine 610. N-linked (GlcNAc...) asparagine glycans are attached at residues asparagine 631, asparagine 671, asparagine 706, and asparagine 734.

This sequence belongs to the secreted LysM effector family.

The protein resides in the membrane. Its function is as follows. Non-secreted LysM effector that might be involved in manipulation of host defenses for successful infection. This chain is Non-secreted LysM effector LysM17, found in Penicillium expansum (Blue mold rot fungus).